A 288-amino-acid chain; its full sequence is Elongation factor Ts (288 aa).

The tract at residues 82 to 85 is involved in Mg(2+) ion dislocation from EF-Tu; it reads TDFV.

This sequence belongs to the EF-Ts family.

The protein localises to the cytoplasm. Associates with the EF-Tu.GDP complex and induces the exchange of GDP to GTP. It remains bound to the aminoacyl-tRNA.EF-Tu.GTP complex up to the GTP hydrolysis stage on the ribosome. In Chlorobaculum parvum (strain DSM 263 / NCIMB 8327) (Chlorobium vibrioforme subsp. thiosulfatophilum), this protein is Elongation factor Ts.